Consider the following 230-residue polypeptide: UPF0758 protein ABC2615 (230 aa).

Positions 104–226 (VISSPEDAAE…FISLKERGFF (123 aa)) constitute an MPN domain. Zn(2+) contacts are provided by His175, His177, and Asp188. The short motif at 175–188 (HNHPSGDPSPSPED) is the JAMM motif element.

It belongs to the UPF0758 family.

In Shouchella clausii (strain KSM-K16) (Alkalihalobacillus clausii), this protein is UPF0758 protein ABC2615.